The following is an 858-amino-acid chain: Polyhomeotic-like protein 2 (858 aa).

Disordered stretches follow at residues 1 to 76 (MENE…QYLQ), 230 to 307 (QQTP…MEGR), 337 to 388 (PQPS…VALQ), 407 to 444 (LQCPTANLHKPGGSQQCHPPTPDTGPQNGHPEGVPHTP), 473 to 493 (KEVAPGEKSVPETRSGPSPHQ), and 529 to 561 (TDLSSPGMTSGNGNSASSIAGTAPQNGENKPPQ). Composition is skewed to low complexity over residues 10–34 (TSSSACATSSTSGASSSSGCNNSSS) and 230–241 (QQTPAAAASGPT). Residues 33 to 53 (SSGGSGRPTGPQISVYSGIPD) form an interaction with BMI1 region. A compositionally biased stretch (polar residues) spans 265-274 (PAQSRNTAQA). Positions 337–358 (PQPSSKHLQPQFVIQQQPQPQQ) are enriched in low complexity. The segment covering 379-388 (ASVSPSVALQ) has biased composition (polar residues). Residues 473–483 (KEVAPGEKSVP) show a composition bias toward basic and acidic residues. Positions 537-551 (TSGNGNSASSIAGTA) are enriched in low complexity. Residues 558-587 (KPPQAIVKPQILTHVIEGFVIQEGAEPFPV) carry the HD1 motif. Glycyl lysine isopeptide (Lys-Gly) (interchain with G-Cter in SUMO2) cross-links involve residues K598 and K600. A Phosphothreonine modification is found at T619. Position 621 is a phosphoserine (S621). Residue K632 forms a Glycyl lysine isopeptide (Lys-Gly) (interchain with G-Cter in SUMO2) linkage. The FCS-type zinc finger occupies 633–667 (EEGAPLKLKCELCGRVDFAYKFKRSKRFCSMACAK). Residues C642, C645, C661, and C665 each contribute to the Zn(2+) site. 2 disordered regions span residues 688 to 720 (QKAGAATHNRRRASKASLPPLTKDTKKQPTGTV) and 732 to 768 (HSQEDSSRCSDNSSYEEPLSPISASSSTSRRRQGQRD). Residue K702 forms a Glycyl lysine isopeptide (Lys-Gly) (interchain with G-Cter in SUMO2) linkage. Position 751 is a phosphoserine (S751). One can recognise an SAM domain in the interval 794–858 (WNVEDVYEFI…YARISMLKDS (65 aa)). A Glycyl lysine isopeptide (Lys-Gly) (interchain with G-Cter in SUMO2) cross-link involves residue K847.

As to quaternary structure, component of a PRC1-like complex. Interacts with CBX4. Interacts with BMI1, PCGF2, PHC1 and RNF2. Interacts with CHTOP. Interacts with the N-terminal region of the SP1 transcription factor and with MAPKAPK2. Interacts with SAMD7 and SAMD11.

It is found in the nucleus. Functionally, component of a Polycomb group (PcG) multiprotein PRC1-like complex, a complex class required to maintain the transcriptionally repressive state of many genes, including Hox genes, throughout development. PcG PRC1 complex acts via chromatin remodeling and modification of histones; it mediates monoubiquitination of histone H2A 'Lys-119', rendering chromatin heritably changed in its expressibility. This is Polyhomeotic-like protein 2 (PHC2) from Homo sapiens (Human).